Here is a 310-residue protein sequence, read N- to C-terminus: Aspartate carbamoyltransferase catalytic subunit (310 aa).

Residues Arg55 and Thr56 each contribute to the carbamoyl phosphate site. Lys85 provides a ligand contact to L-aspartate. Arg106, His135, and Gln138 together coordinate carbamoyl phosphate. L-aspartate contacts are provided by Arg168 and Arg230. Positions 268 and 269 each coordinate carbamoyl phosphate.

This sequence belongs to the aspartate/ornithine carbamoyltransferase superfamily. ATCase family. As to quaternary structure, heterododecamer (2C3:3R2) of six catalytic PyrB chains organized as two trimers (C3), and six regulatory PyrI chains organized as three dimers (R2).

The enzyme catalyses carbamoyl phosphate + L-aspartate = N-carbamoyl-L-aspartate + phosphate + H(+). It participates in pyrimidine metabolism; UMP biosynthesis via de novo pathway; (S)-dihydroorotate from bicarbonate: step 2/3. Its function is as follows. Catalyzes the condensation of carbamoyl phosphate and aspartate to form carbamoyl aspartate and inorganic phosphate, the committed step in the de novo pyrimidine nucleotide biosynthesis pathway. The protein is Aspartate carbamoyltransferase catalytic subunit of Buchnera aphidicola subsp. Acyrthosiphon pisum (strain 5A).